The primary structure comprises 130 residues: Glycine cleavage system H protein (130 aa).

The Lipoyl-binding domain maps to isoleucine 24 to lysine 106. N6-lipoyllysine is present on lysine 65.

This sequence belongs to the GcvH family. In terms of assembly, the glycine cleavage system is composed of four proteins: P, T, L and H. It depends on (R)-lipoate as a cofactor.

Its function is as follows. The glycine cleavage system catalyzes the degradation of glycine. The H protein shuttles the methylamine group of glycine from the P protein to the T protein. In Pectobacterium atrosepticum (strain SCRI 1043 / ATCC BAA-672) (Erwinia carotovora subsp. atroseptica), this protein is Glycine cleavage system H protein.